Consider the following 236-residue polypeptide: Sensory rhodopsin II (236 aa).

7 consecutive transmembrane segments (helical) span residues 4–24 (ITTW…VLAY), 38–58 (LLLI…ALGF), 73–93 (YVDW…LAGA), 101–121 (LVVL…TPSP), 122–142 (VSYA…YLLY), 167–187 (FVVV…AGVG), and 196–216 (LVVV…ALLA). At Lys206 the chain carries N6-(retinylidene)lysine.

The protein belongs to the archaeal/bacterial/fungal opsin family. Post-translationally, the covalent binding of retinal to the apoprotein, bacterioopsin, generates bacteriorhodopsin.

It localises to the membrane. Its function is as follows. Mediates the photorepellent response. This is Sensory rhodopsin II (sop2) from Haloarcula marismortui (strain ATCC 43049 / DSM 3752 / JCM 8966 / VKM B-1809) (Halobacterium marismortui).